Here is a 471-residue protein sequence, read N- to C-terminus: Heat shock 70 kDa protein 13 (471 aa).

Positions M1–A22 are cleaved as a signal peptide. The disordered stretch occupies residues E314–K352. Residues E315–V341 show a composition bias toward basic and acidic residues.

It belongs to the heat shock protein 70 family. Binds UBQLN2.

Its subcellular location is the microsome. The protein localises to the endoplasmic reticulum. Functionally, has peptide-independent ATPase activity. The polypeptide is Heat shock 70 kDa protein 13 (HSPA13) (Pongo abelii (Sumatran orangutan)).